The primary structure comprises 184 residues: MAILKWKRSRWYSSDEISFAGIVTKLPTANNTTTSNSKTCALGTSEGVRRATTSTKRPRTEPEHRNTHHPNKLLRGDSVDSVNCGVISAAACTNQTRAVSCPATTPIIHLKGDANILKCLRYRLSKYKQLYEQVSSTWHWTCTDGKHKNAIVTLTYISTSQRDDFLNTVKIPNTVSVSTGYMTI.

The segment at 33–74 is disordered; that stretch reads TTSNSKTCALGTSEGVRRATTSTKRPRTEPEHRNTHHPNKLL.

This sequence belongs to the papillomaviridae E8^E2C protein family.

It localises to the host nucleus. In terms of biological role, plays a role in limiting the replication of viral DNA in keratinocytes. Recruits the host NCoR/SMRT complex to viral replication foci to mediate repression of both viral replication and transcription. The chain is Protein E8^E2C from Human papillomavirus 31.